The sequence spans 252 residues: Probable transcriptional regulatory protein Lxx10750 (252 aa).

It belongs to the TACO1 family.

The protein localises to the cytoplasm. The chain is Probable transcriptional regulatory protein Lxx10750 from Leifsonia xyli subsp. xyli (strain CTCB07).